The chain runs to 233 residues: Large ribosomal subunit protein uL1 (233 aa).

It belongs to the universal ribosomal protein uL1 family. Part of the 50S ribosomal subunit.

Its function is as follows. Binds directly to 23S rRNA. The L1 stalk is quite mobile in the ribosome, and is involved in E site tRNA release. Protein L1 is also a translational repressor protein, it controls the translation of the L11 operon by binding to its mRNA. In Campylobacter jejuni subsp. doylei (strain ATCC BAA-1458 / RM4099 / 269.97), this protein is Large ribosomal subunit protein uL1.